We begin with the raw amino-acid sequence, 474 residues long: Coronin-1C (474 aa).

WD repeat units follow at residues 25–70, 78–118, 128–168, 172–202, 215–249, and 263–303; these read DDIR…GRID, GHTG…LTLS, GHSK…ALIN, MHSD…RVID, AHEG…ALWN, and DTSN…PYVH. Positions 436-474 form a coiled coil; sequence QNEAKLDEILKEIKSIKDTICNQDERISKLEQQMAKIAA. Lys-446 bears the N6-acetyllysine mark.

Belongs to the WD repeat coronin family. Binds F-actin. Interacts with RCC2. Interacts preferentially with nucleotide-free and GDP-bound RAC1. Interacts with VIM (via head domain). Isoform 1 and isoform 2 appear as homotrimers, while isoform 3 seems to exist as monomers. Interacts with MICAL2; this interaction recruits MICAL2 to the actin filaments. Ubiquitous.

It is found in the cell membrane. Its subcellular location is the cell projection. It localises to the lamellipodium. The protein localises to the ruffle membrane. The protein resides in the cytoplasm. It is found in the cytoskeleton. Its subcellular location is the cell cortex. It localises to the endosome membrane. The protein localises to the sarcolemma. The protein resides in the myofibril. It is found in the sarcomere. Its subcellular location is the synapse. Plays a role in directed cell migration by regulating the activation and subcellular location of RAC1. Increases the presence of activated RAC1 at the leading edge of migrating cells. Required for normal organization of the cytoskeleton, including the actin cytoskeleton, microtubules and the vimentin intermediate filaments. Plays a role in endoplasmic reticulum-associated endosome fission: localizes to endosome membrane tubules and promotes recruitment of TMCC1, leading to recruitment of the endoplasmic reticulum to endosome tubules for fission. Endosome membrane fission of early and late endosomes is essential to separate regions destined for lysosomal degradation from carriers to be recycled to the plasma membrane. Required for normal cell proliferation, cell migration, and normal formation of lamellipodia. Required for normal distribution of mitochondria within cells. Functionally, involved in myogenic differentiation. The chain is Coronin-1C from Homo sapiens (Human).